The following is a 264-amino-acid chain: Thymidylate synthase (264 aa).

Residue Arg-21 coordinates dUMP. His-51 contacts (6R)-5,10-methylene-5,6,7,8-tetrahydrofolate. 126-127 (RR) is a binding site for dUMP. Catalysis depends on Cys-146, which acts as the Nucleophile. DUMP is bound by residues 166–169 (RSCD), Asn-177, and 207–209 (HLY). (6R)-5,10-methylene-5,6,7,8-tetrahydrofolate is bound at residue Asp-169. Ala-263 lines the (6R)-5,10-methylene-5,6,7,8-tetrahydrofolate pocket.

This sequence belongs to the thymidylate synthase family. Bacterial-type ThyA subfamily. As to quaternary structure, homodimer.

The protein localises to the cytoplasm. The enzyme catalyses dUMP + (6R)-5,10-methylene-5,6,7,8-tetrahydrofolate = 7,8-dihydrofolate + dTMP. It functions in the pathway pyrimidine metabolism; dTTP biosynthesis. Catalyzes the reductive methylation of 2'-deoxyuridine-5'-monophosphate (dUMP) to 2'-deoxythymidine-5'-monophosphate (dTMP) while utilizing 5,10-methylenetetrahydrofolate (mTHF) as the methyl donor and reductant in the reaction, yielding dihydrofolate (DHF) as a by-product. This enzymatic reaction provides an intracellular de novo source of dTMP, an essential precursor for DNA biosynthesis. The polypeptide is Thymidylate synthase (Salmonella arizonae (strain ATCC BAA-731 / CDC346-86 / RSK2980)).